Consider the following 66-residue polypeptide: uncharacterized protein (66 aa).

This is an uncharacterized protein from Homo sapiens (Human).